Consider the following 372-residue polypeptide: F-box protein AFR (372 aa).

Residues 1–15 show a composition bias toward polar residues; it reads MAEQETTSNINTIND. A disordered region spans residues 1-27; that stretch reads MAEQETTSNINTINDQAEEETRTKSQP. The F-box domain maps to 29 to 74; that stretch reads ISGLPNDIAELCLLRLPYPYHALYRSVSSSWNKTITNPRFLFSKQS. Kelch repeat units lie at residues 80–126, 135–178, 179–227, 229–276, and 279–325; these read PYLF…HALS, KLFV…NVNG, KIMA…VIGK, MCVT…IRDR, and VISE…DRVF.

Part of a SCF (ASK-cullin-F-box) protein ligase complex. Interacts with SKP1A.

Its pathway is protein modification; protein ubiquitination. Component of SCF (ASK-cullin-F-box) E3 ubiquitin ligase complexes, which may mediate the ubiquitination and subsequent proteasomal degradation of target proteins. Part of the phyA-mediated signaling transduction pathway leading to the regulation of gene expression and hypocotyls elongation in response to red and far-red light exposure. The sequence is that of F-box protein AFR (AFR) from Arabidopsis thaliana (Mouse-ear cress).